The primary structure comprises 268 residues: Malonyl-[acyl-carrier protein] O-methyltransferase 1 (268 aa).

Belongs to the methyltransferase superfamily.

It carries out the reaction malonyl-[ACP] + S-adenosyl-L-methionine = malonyl-[ACP] methyl ester + S-adenosyl-L-homocysteine. The protein operates within cofactor biosynthesis; biotin biosynthesis. Its function is as follows. Converts the free carboxyl group of a malonyl-thioester to its methyl ester by transfer of a methyl group from S-adenosyl-L-methionine (SAM). It allows to synthesize pimeloyl-ACP via the fatty acid synthetic pathway. This is Malonyl-[acyl-carrier protein] O-methyltransferase 1 from Ilyobacter polytropus (strain ATCC 51220 / DSM 2926 / LMG 16218 / CuHBu1).